We begin with the raw amino-acid sequence, 168 residues long: Transcriptional repressor NrdR (168 aa).

A zinc finger spans residues 3-34 (CPYCGFAQDRVVDSRESKEADSIRRRRECERC). Positions 49 to 139 (YMVVKKDGRR…VYRDFKDVNE (91 aa)) constitute an ATP-cone domain.

This sequence belongs to the NrdR family. Zn(2+) serves as cofactor.

Functionally, negatively regulates transcription of bacterial ribonucleotide reductase nrd genes and operons by binding to NrdR-boxes. The protein is Transcriptional repressor NrdR of Acidobacterium capsulatum (strain ATCC 51196 / DSM 11244 / BCRC 80197 / JCM 7670 / NBRC 15755 / NCIMB 13165 / 161).